We begin with the raw amino-acid sequence, 347 residues long: Cannabinoid receptor 2 (347 aa).

At M1–Q33 the chain is on the extracellular side. N11 carries N-linked (GlcNAc...) asparagine glycosylation. The chain crosses the membrane as a helical span at residues I34–L59. Residues S60–L71 are Cytoplasmic-facing. A helical membrane pass occupies residues F72 to V92. The Extracellular portion of the chain corresponds to I93–A104. A helical transmembrane segment spans residues I105–V129. Over D130 to R149 the chain is Cytoplasmic. A helical transmembrane segment spans residues A150 to W172. At T173 to N188 the chain is on the extracellular side. A helical membrane pass occupies residues D189 to W214. The Cytoplasmic portion of the chain corresponds to K215–T246. Residues L247–H267 traverse the membrane as a helical segment. Over S268–E279 the chain is Extracellular. A helical membrane pass occupies residues A280–L301. Residues R302 to T347 lie on the Cytoplasmic side of the membrane. The tract at residues P326 to T347 is disordered. 2 positions are modified to phosphoserine: S335 and S336. Position 338 is a phosphothreonine (T338).

It belongs to the G-protein coupled receptor 1 family. As to expression, expressed by cells of hematopoietic origin. Expressed in skin in suprabasal layers and hair follicles, in brain by neurons and glial cells and by osteoblasts, osteocytes, osteoclasts (at protein level).

It localises to the cell membrane. The protein localises to the cell projection. Its subcellular location is the dendrite. The protein resides in the perikaryon. In terms of biological role, heterotrimeric G protein-coupled receptor for endocannabinoid 2-arachidonoylglycerol mediating inhibition of adenylate cyclase. May function in inflammatory response, nociceptive transmission and bone homeostasis. This chain is Cannabinoid receptor 2 (Cnr2), found in Mus musculus (Mouse).